The chain runs to 2028 residues: Protein Daple (2028 aa).

One can recognise a Calponin-homology (CH) domain in the interval 11-131 (LFLQSPLVTW…KVLLLVLGCA (121 aa)). The tract at residues 222 to 250 (AQHPPSPIKSSSADSTPSPTSSLSSEDKQ) is disordered. 2 positions are modified to phosphoserine: Ser-227 and Ser-239. A compositionally biased stretch (low complexity) spans 229-245 (IKSSSADSTPSPTSSLS). 4 coiled-coil regions span residues 247 to 428 (EDKQ…SMNE), 456 to 1017 (ELNE…QGEG), 1045 to 1094 (HKEA…SSQI), and 1139 to 1393 (LQNH…DQYK). A Phosphoserine modification is found at Ser-486. Residues 1011 to 1024 (RQNQGEGQHLQNSF) are compositionally biased toward polar residues. Positions 1011 to 1043 (RQNQGEGQHLQNSFKHPAGKTAASHQGKEAWGP) are disordered. Residues 1419-1428 (KEGSRERLKS) show a composition bias toward basic and acidic residues. Disordered regions lie at residues 1419-1724 (KEGS…GAKM) and 1736-1803 (AAPT…SLSR). Low complexity-rich tracts occupy residues 1439-1450 (SSDPASPAASQP), 1517-1534 (SRTCSTSATTTAPSNSTP), and 1568-1588 (SRPSSLESSRNTSSNSSPLNL). Ser-1444 carries the post-translational modification Phosphoserine. The span at 1589 to 1604 (KGSSEQLHGRSESFSS) shows a compositional bias: polar residues. Ser-1601 carries the phosphoserine modification. The short motif at 1661-1691 (CSASPSSEMVTLEEFLEESNRSSPTHDTPSC) is the GBA element. Positions 1689-1704 (PSCRDDLLSDYFRKAS) are enriched in basic and acidic residues. The span at 1792–1803 (HAPASRSASLSR) shows a compositional bias: low complexity. Residue Ser-1806 is modified to Phosphoserine. The disordered stretch occupies residues 1816-2021 (SGPEACKQES…PEPGGDPQTV (206 aa)). A compositionally biased stretch (polar residues) spans 1842 to 1855 (SHTLQSPAPPSSHS). Over residues 1879 to 1897 (RPLDTRRFSLAPPKEERLA) the composition is skewed to basic and acidic residues. Over residues 1902-1924 (SATAPAIATAGAGAAAAGSGSNS) the composition is skewed to low complexity. Phosphothreonine is present on Thr-1954. The short motif at 2025 to 2028 (YGCV) is the PDZ-binding element. Residues 2026–2028 (GCV) are DVL1-binding.

The protein belongs to the CCDC88 family. Homooligomer. Interacts with DVL1 (via PDZ domain); dissociates following initiation of non-canonical Wnt signaling. Interacts (via C-terminus) with ligand-activated Wnt receptor FZD7; competes with DVL1 for binding to FZD7 and displaces DVL1 from ligand-activated FZD7. Interacts (via GBA motif) with guanine nucleotide-binding protein G(i) alpha subunits GNAI1, GNAI2 and GNAI3 (inactive GDP-bound form); interacts with higher affinity with GNAI1 and GNAI3 than with GNAI2 and interaction leads to G(i) alpha subunit activation. Does not interact with GNAO1.

The protein localises to the cytoplasm. It localises to the cell junction. Functionally, required for activation of guanine nucleotide-binding proteins (G-proteins) during non-canonical Wnt signaling. Binds to ligand-activated Wnt receptor FZD7, displacing DVL1 from the FZD7 receptor and leading to inhibition of canonical Wnt signaling. Acts as a non-receptor guanine nucleotide exchange factor by also binding to guanine nucleotide-binding protein G(i) alpha (Gi-alpha) subunits, leading to their activation. Binding to Gi-alpha subunits displaces the beta and gamma subunits from the heterotrimeric G-protein complex, triggering non-canonical Wnt responses such as activation of RAC1 and PI3K-AKT signaling. Promotes apical constriction of cells via ARHGEF18. The chain is Protein Daple (CCDC88C) from Homo sapiens (Human).